We begin with the raw amino-acid sequence, 459 residues long: Mitochondrial distribution and morphology protein 34 (459 aa).

The SMP-LTD domain occupies 1–190; the sequence is MSFRFNEAVF…LPSLIFNTSQ (190 aa). Basic and acidic residues predominate over residues 338–347; the sequence is RSNSNDDNAK. Residues 338 to 375 are disordered; sequence RSNSNDDNAKPRRRKIKCKKTRTPSNLQSQGEQAVDDS. The segment covering 348-359 has biased composition (basic residues); that stretch reads PRRRKIKCKKTR.

This sequence belongs to the MDM34 family. As to quaternary structure, component of the ER-mitochondria encounter structure (ERMES) or MDM complex, composed of MMM1, MDM10, MDM12 and MDM34. Ubiquitinated by a SCF (SKP1-CUL1-F-box protein) E3 ubiquitin-protein ligase complex containing the F-box protein MDM30. Ubiquitination is important for mitochondrial integrity.

Its subcellular location is the mitochondrion outer membrane. In terms of biological role, component of the ERMES/MDM complex, which serves as a molecular tether to connect the endoplasmic reticulum (ER) and mitochondria. Components of this complex are involved in the control of mitochondrial shape and protein biogenesis, and function in nonvesicular lipid trafficking between the ER and mitochondria. MDM34 is required for the interaction of the ER-resident membrane protein MMM1 and the outer mitochondrial membrane-resident beta-barrel protein MDM10. In Saccharomyces cerevisiae (strain YJM789) (Baker's yeast), this protein is Mitochondrial distribution and morphology protein 34.